The sequence spans 892 residues: Chromodomain-helicase-DNA-binding protein 3 (892 aa).

The span at 1-20 (MSSKRGADPDWKTPGKASKD) shows a compositional bias: basic and acidic residues. Positions 1–29 (MSSKRGADPDWKTPGKASKDKRPKTNAKK) are disordered. A PHD-type zinc finger spans residues 35 to 82 (EEYCKVCSDGGDLLCCDSCPSVYHRTCLSPPLKSIPKGDWICPRCIPL). 2 consecutive Chromo domains span residues 84 to 156 (GKAE…PSLE) and 179 to 240 (LLVQ…GRQR). The region spanning 279–458 (RYSWGQGIPT…FHLLNFLSSG (180 aa)) is the Helicase ATP-binding domain. 292-299 (DEMGLGKT) serves as a coordination point for ATP. Residues 409 to 412 (DEAH) carry the DEAH box motif. The Helicase C-terminal domain maps to 590-739 (LLSKMLKQLK…LTHLVVRPGM (150 aa)). Positions 839–892 (SQPKLPKKQKKQSQQSQVDVESIMGKGKRIRKEIDYSNQYPSPNRATPSSIVLM) are disordered. The span at 874–892 (YSNQYPSPNRATPSSIVLM) shows a compositional bias: polar residues.

Belongs to the SNF2/RAD54 helicase family. Monomer.

It localises to the nucleus. It is found in the chromosome. It catalyses the reaction ATP + H2O = ADP + phosphate + H(+). With respect to regulation, ATPase activity is stimulated by binding to DNA or nucleosomes, but is strongly activated by nucleosomes. Its function is as follows. ATP-dependent chromatin-remodeling factor which acts in nucleosome-remodeling by catalyzing ATP-dependent nucleosome mobilization. Likely to be involved in the regulation of transcription. The chain is Chromodomain-helicase-DNA-binding protein 3 from Drosophila melanogaster (Fruit fly).